Here is a 394-residue protein sequence, read N- to C-terminus: Glycerol-1-phosphate dehydrogenase [NAD(P)+] (394 aa).

NAD(+)-binding positions include Asp-54, 116 to 120, and 138 to 141; these read GTIHD and TAPS. Residue Asp-143 coordinates substrate. An NAD(+)-binding site is contributed by Ser-147. Asp-190 is a substrate binding site. Ni(2+) contacts are provided by Asp-190 and His-270. His-274 serves as a coordination point for substrate. A Ni(2+)-binding site is contributed by His-290.

Belongs to the glycerol-1-phosphate dehydrogenase family. As to quaternary structure, homodimer. Requires Ni(2+) as cofactor.

Its subcellular location is the cytoplasm. The enzyme catalyses sn-glycerol 1-phosphate + NAD(+) = dihydroxyacetone phosphate + NADH + H(+). It carries out the reaction sn-glycerol 1-phosphate + NADP(+) = dihydroxyacetone phosphate + NADPH + H(+). In terms of biological role, catalyzes the NAD(P)H-dependent reduction of dihydroxyacetonephosphate (DHAP or glycerone phosphate) to glycerol 1-phosphate (G1P). The G1P thus generated is probably used for the synthesis of phosphoglycerolipids in Gram-positive bacterial species. The polypeptide is Glycerol-1-phosphate dehydrogenase [NAD(P)+] (Bacillus velezensis (strain DSM 23117 / BGSC 10A6 / LMG 26770 / FZB42) (Bacillus amyloliquefaciens subsp. plantarum)).